Here is a 219-residue protein sequence, read N- to C-terminus: MAGRPVPAGRQEEELAKDPGQKLSLARPPGRLPSIDETRPAGPGPASRRGSVLGPASSFSRRNSLAGAGAGPGGRRPSLGPVPPLGWRVSFSGLPLGPARRPAPSYRTEPAPGERWEAARAQRALEAALAAGLRDARYVGAEAGRLARELCDLARVHLRELSPPRYKLVCSVVLGPRAGQGVHVPSRALWDTACDGLASATVTNASLFAVATVHGLYCE.

A disordered region spans residues 1 to 84 (MAGRPVPAGR…RRPSLGPVPP (84 aa)). Positions 10–20 (RQEEELAKDPG) are enriched in basic and acidic residues. A Phosphoserine modification is found at serine 64.

This sequence belongs to the dynein light chain Tctex-type family. In terms of assembly, interacts with ENG/endoglin, TGFBR2 and TGFBR3. Interacts with PPP1CC.

It localises to the cell projection. The protein resides in the cilium. Its subcellular location is the flagellum. The protein localises to the cytoplasmic vesicle. It is found in the secretory vesicle. It localises to the acrosome. The protein resides in the cytoplasm. Its subcellular location is the cytoskeleton. The protein localises to the cilium axoneme. It is found in the nucleus. It localises to the microtubule organizing center. This is Dynein light chain Tctex-type 4 (DYNLT4) from Sus scrofa (Pig).